A 205-amino-acid chain; its full sequence is MVGIVNYNIGNLASVLNALVKVGAKAQIEKEPSRLLEYDRLILPGVGAFGDAMEHLVQSGMKEAVLEFAKSGKPLLGICLGMQLLFEKSYEFGEHAGLGLLEGEIIPFDKTRMGEGYKIPQMGWNRFYAKKKSPLLKGLEEGFYLYYVHSFHAVAKREEDVLGESVYGYPFVSAIERDNVAGFQPHPEKSHDVGLRILKNFCEIG.

In terms of domain architecture, Glutamine amidotransferase type-1 spans 1 to 205 (MVGIVNYNIG…RILKNFCEIG (205 aa)). C79 serves as the catalytic Nucleophile. Active-site residues include H186 and E188.

As to quaternary structure, heterodimer of HisH and HisF.

Its subcellular location is the cytoplasm. The catalysed reaction is 5-[(5-phospho-1-deoxy-D-ribulos-1-ylimino)methylamino]-1-(5-phospho-beta-D-ribosyl)imidazole-4-carboxamide + L-glutamine = D-erythro-1-(imidazol-4-yl)glycerol 3-phosphate + 5-amino-1-(5-phospho-beta-D-ribosyl)imidazole-4-carboxamide + L-glutamate + H(+). The enzyme catalyses L-glutamine + H2O = L-glutamate + NH4(+). The protein operates within amino-acid biosynthesis; L-histidine biosynthesis; L-histidine from 5-phospho-alpha-D-ribose 1-diphosphate: step 5/9. Functionally, IGPS catalyzes the conversion of PRFAR and glutamine to IGP, AICAR and glutamate. The HisH subunit catalyzes the hydrolysis of glutamine to glutamate and ammonia as part of the synthesis of IGP and AICAR. The resulting ammonia molecule is channeled to the active site of HisF. This is Imidazole glycerol phosphate synthase subunit HisH from Wolinella succinogenes (strain ATCC 29543 / DSM 1740 / CCUG 13145 / JCM 31913 / LMG 7466 / NCTC 11488 / FDC 602W) (Vibrio succinogenes).